We begin with the raw amino-acid sequence, 302 residues long: N-acetylmuramic acid 6-phosphate etherase (302 aa).

An SIS domain is found at 58-221; that stretch reads IGESFLNGGR…STGAMVKTGK (164 aa). Glu-86 serves as the catalytic Proton donor. Glu-117 is an active-site residue.

Belongs to the GCKR-like family. MurNAc-6-P etherase subfamily. In terms of assembly, homodimer.

It catalyses the reaction N-acetyl-D-muramate 6-phosphate + H2O = N-acetyl-D-glucosamine 6-phosphate + (R)-lactate. It participates in amino-sugar metabolism; N-acetylmuramate degradation. Specifically catalyzes the cleavage of the D-lactyl ether substituent of MurNAc 6-phosphate, producing GlcNAc 6-phosphate and D-lactate. The sequence is that of N-acetylmuramic acid 6-phosphate etherase from Clostridium botulinum (strain Okra / Type B1).